A 293-amino-acid chain; its full sequence is Putative ribose uptake protein RbsU (293 aa).

10 helical membrane passes run 5–24 (ALLI…TVAS), 34–51 (IIGA…LAVV), 58–80 (TGTN…IITF), 95–114 (TTAF…LGNW), 121–138 (IIGF…RMTV), 153–170 (RAVV…LYSA), 177–199 (IDGL…IYGF), 212–234 (ITWL…LISA), 241–263 (LATG…IYFL), and 273–292 (VITI…TVFI).

Belongs to the GRP transporter (TC 2.A.7.5) family.

The protein localises to the cell membrane. In terms of biological role, could be involved in the uptake of ribose. The protein is Putative ribose uptake protein RbsU (rbsU) of Staphylococcus aureus (strain COL).